A 604-amino-acid chain; its full sequence is Testis-expressed protein 13C-1 (604 aa).

Disordered regions lie at residues 314-337 (EGEG…SHKD), 374-397 (PVMP…RPKI), 485-523 (CLNA…HPRK), and 538-580 (ATKQ…SANC). Positions 322-333 (QGTSLHGDSSNN) are enriched in polar residues. The span at 544–572 (KQPEGIKSLESKQPQETKSSESKQQEKPL) shows a compositional bias: basic and acidic residues.

The protein belongs to the TEX13 family.

Plays a role in transcriptional repression. The chain is Testis-expressed protein 13C-1 from Mus musculus (Mouse).